A 238-amino-acid chain; its full sequence is MSLRTSGHPGALVAAHCRVHKPASIYPLETGSLNGPDPEAVSHRGHATAARVHPRVVDPLAVSRKEDQPVPAFGQGPSDVEASHGHPSLFRVPVGRIQSLYPVPHLGQCRARSPHDVSHPVHRQHVGHVPHSLDYPVCPRDPQGREDVSTDDGNLFRDSFYRHIFARVRNVRDVEPADLNLIPEFPVASLAATGNSPLVTSLRPDVSGIFWPIWTPRRPRRGGQCLASTSPEGRSLRM.

This is an uncharacterized protein from Frog virus 3 (isolate Goorha) (FV-3).